Reading from the N-terminus, the 570-residue chain is Dihydroxy-acid dehydratase (570 aa).

[2Fe-2S] cluster is bound at residue cysteine 61. Aspartate 94 provides a ligand contact to Mg(2+). Residue cysteine 135 coordinates [2Fe-2S] cluster. Mg(2+) is bound by residues aspartate 136 and lysine 137. Residue lysine 137 is modified to N6-carboxylysine. Residue cysteine 207 participates in [2Fe-2S] cluster binding. Glutamate 459 is a Mg(2+) binding site. Serine 485 (proton acceptor) is an active-site residue.

Belongs to the IlvD/Edd family. In terms of assembly, homodimer. Requires [2Fe-2S] cluster as cofactor. Mg(2+) serves as cofactor.

The catalysed reaction is (2R)-2,3-dihydroxy-3-methylbutanoate = 3-methyl-2-oxobutanoate + H2O. The enzyme catalyses (2R,3R)-2,3-dihydroxy-3-methylpentanoate = (S)-3-methyl-2-oxopentanoate + H2O. It functions in the pathway amino-acid biosynthesis; L-isoleucine biosynthesis; L-isoleucine from 2-oxobutanoate: step 3/4. It participates in amino-acid biosynthesis; L-valine biosynthesis; L-valine from pyruvate: step 3/4. Functionally, functions in the biosynthesis of branched-chain amino acids. Catalyzes the dehydration of (2R,3R)-2,3-dihydroxy-3-methylpentanoate (2,3-dihydroxy-3-methylvalerate) into 2-oxo-3-methylpentanoate (2-oxo-3-methylvalerate) and of (2R)-2,3-dihydroxy-3-methylbutanoate (2,3-dihydroxyisovalerate) into 2-oxo-3-methylbutanoate (2-oxoisovalerate), the penultimate precursor to L-isoleucine and L-valine, respectively. This Lactococcus lactis subsp. lactis (strain IL1403) (Streptococcus lactis) protein is Dihydroxy-acid dehydratase.